A 247-amino-acid chain; its full sequence is Mannose-specific lectin CML-2 (247 aa).

2 residues coordinate a carbohydrate: Asp-87 and Gly-107. Residue Asn-119 is glycosylated (N-linked (GlcNAc...) asparagine). The Mn(2+) site is built by Glu-129 and Asp-131. The Ca(2+) site is built by Asp-131 and Phe-133. A carbohydrate contacts are provided by Ser-138 and Asn-139. Residues Asn-139 and Asp-142 each coordinate Ca(2+). Positions 142 and 147 each coordinate Mn(2+). Positions 221, 222, and 223 each coordinate a carbohydrate.

It belongs to the leguminous lectin family. As to quaternary structure, homodimer; non-covalently linked. Glycosylated.

Its function is as follows. Mannose-specific lectin. Also binds alpha-methyl-D-mannoside, D-glucose, N-acetyl-D-glucosamine and sucrose but not D-galactose, D-arabinose, D-fructose, D-xylose, lactose or glycoproteins fetiun, PSM and ovalbumin. Shows agglutinating activity towards rabbit erythrocytes. This chain is Mannose-specific lectin CML-2, found in Centrolobium microchaete (Canarywood tree).